Here is a 419-residue protein sequence, read N- to C-terminus: UDP-N-acetylglucosamine 1-carboxyvinyltransferase (419 aa).

Phosphoenolpyruvate is bound at residue 22–23; sequence KN. Arginine 93 is a binding site for UDP-N-acetyl-alpha-D-glucosamine. Residue cysteine 117 is the Proton donor of the active site. Cysteine 117 carries the post-translational modification 2-(S-cysteinyl)pyruvic acid O-phosphothioketal. UDP-N-acetyl-alpha-D-glucosamine contacts are provided by aspartate 307 and isoleucine 329.

Belongs to the EPSP synthase family. MurA subfamily.

It is found in the cytoplasm. The enzyme catalyses phosphoenolpyruvate + UDP-N-acetyl-alpha-D-glucosamine = UDP-N-acetyl-3-O-(1-carboxyvinyl)-alpha-D-glucosamine + phosphate. Its pathway is cell wall biogenesis; peptidoglycan biosynthesis. Functionally, cell wall formation. Adds enolpyruvyl to UDP-N-acetylglucosamine. The sequence is that of UDP-N-acetylglucosamine 1-carboxyvinyltransferase from Shewanella frigidimarina (strain NCIMB 400).